Here is a 164-residue protein sequence, read N- to C-terminus: MEMTNAQRLILSNQYKMMTMLDPANAERYRRLQTIIERGYGLQMRELDREFGELKEETCRTIIDIMEMYHALHVSWSNLQDQQSIDERRVTFLGFDAATEARYLGYVRFMVNVEGRYTHFDAGTHGFNAQTPMWEKYQRMLNVWHACPRQYHLSANEINQIINA.

Belongs to the UPF0304 family.

The protein is UPF0304 protein YfbU (yfbU) of Escherichia coli O6:H1 (strain CFT073 / ATCC 700928 / UPEC).